The following is a 373-amino-acid chain: Carnosine N-methyltransferase (373 aa).

S-adenosyl-L-methionine contacts are provided by Gln110, Arg113, Gly154, Glu175, Asp242, Phe243, and Cys262. Asp266 provides a ligand contact to carnosine. Tyr274 is an S-adenosyl-L-methionine binding site. Carnosine contacts are provided by His297 and Tyr356.

The protein belongs to the carnosine N-methyltransferase family.

The protein resides in the cytoplasm. It localises to the nucleus. It carries out the reaction carnosine + S-adenosyl-L-methionine = anserine + S-adenosyl-L-homocysteine + H(+). Its function is as follows. N-methyltransferase that mediates the formation of anserine (beta-alanyl-N(Pi)-methyl-L-histidine) from carnosine. Also methylates other L-histidine-containing di- and tripeptides such as Gly-Gly-His, Gly-His and homocarnosine (GABA-His). This chain is Carnosine N-methyltransferase, found in Schizosaccharomyces pombe (strain 972 / ATCC 24843) (Fission yeast).